We begin with the raw amino-acid sequence, 1095 residues long: Putative patatin-like phospholipase domain-containing protein M110.7 (1095 aa).

Residues 9-29 (LLLIFENILELCMCITLVILI) traverse the membrane as a helical segment. Positions 75–113 (HKKRSSKEEMTPDKKRDSSEKISKQPPRELFEPNEQEQV) are disordered. Basic and acidic residues predominate over residues 80–105 (SKEEMTPDKKRDSSEKISKQPPRELF). Residues 144 to 237 (VETL…LTSF), 327 to 416 (RKYE…IQFL), and 450 to 509 (IETG…TVMA) contribute to the a nucleoside 3',5'-cyclic phosphate site. The PNPLA domain occupies 768–935 (IVFGGGGARG…VNNLPADIMR (168 aa)). Residues 772 to 777 (GGGARG) carry the GXGXXG motif. The GXSXG motif lies at 799–803 (GTSIG). The Nucleophile role is filled by Ser-801. Catalysis depends on Asp-922, which acts as the Proton acceptor. The short motif at 922 to 924 (DGA) is the DGA/G element.

Belongs to the NTE family.

The protein resides in the membrane. The polypeptide is Putative patatin-like phospholipase domain-containing protein M110.7 (Caenorhabditis elegans).